The following is a 502-amino-acid chain: Cytochrome P450 71B20 (502 aa).

Residues 1–21 traverse the membrane as a helical segment; sequence MAISFLCFCLITLASLIFFAK. Cys444 provides a ligand contact to heme.

This sequence belongs to the cytochrome P450 family. Requires heme as cofactor.

It is found in the membrane. The chain is Cytochrome P450 71B20 (CYP71B20) from Arabidopsis thaliana (Mouse-ear cress).